A 442-amino-acid polypeptide reads, in one-letter code: Glutamyl-tRNA reductase (442 aa).

Substrate is bound by residues 50 to 53 (TCNR), S109, 114 to 116 (EPQ), and Q120. C51 functions as the Nucleophile in the catalytic mechanism. 189–194 (GAGEMA) provides a ligand contact to NADP(+).

It belongs to the glutamyl-tRNA reductase family. As to quaternary structure, homodimer.

The catalysed reaction is (S)-4-amino-5-oxopentanoate + tRNA(Glu) + NADP(+) = L-glutamyl-tRNA(Glu) + NADPH + H(+). It participates in porphyrin-containing compound metabolism; protoporphyrin-IX biosynthesis; 5-aminolevulinate from L-glutamyl-tRNA(Glu): step 1/2. Its function is as follows. Catalyzes the NADPH-dependent reduction of glutamyl-tRNA(Glu) to glutamate 1-semialdehyde (GSA). This is Glutamyl-tRNA reductase from Nitratidesulfovibrio vulgaris (strain DSM 19637 / Miyazaki F) (Desulfovibrio vulgaris).